Consider the following 77-residue polypeptide: Putative regulatory protein tsl2331 (77 aa).

The protein belongs to the RemA family.

The sequence is that of Putative regulatory protein tsl2331 from Thermosynechococcus vestitus (strain NIES-2133 / IAM M-273 / BP-1).